The sequence spans 430 residues: tRNA(Ile)-lysidine synthase (430 aa).

21–26 (SGGLDS) provides a ligand contact to ATP.

Belongs to the tRNA(Ile)-lysidine synthase family.

It is found in the cytoplasm. It carries out the reaction cytidine(34) in tRNA(Ile2) + L-lysine + ATP = lysidine(34) in tRNA(Ile2) + AMP + diphosphate + H(+). In terms of biological role, ligates lysine onto the cytidine present at position 34 of the AUA codon-specific tRNA(Ile) that contains the anticodon CAU, in an ATP-dependent manner. Cytidine is converted to lysidine, thus changing the amino acid specificity of the tRNA from methionine to isoleucine. In Salmonella paratyphi A (strain ATCC 9150 / SARB42), this protein is tRNA(Ile)-lysidine synthase.